The chain runs to 59 residues: Large ribosomal subunit protein bL32 (59 aa).

Residues 1-59 (MAVQQNKKSPSKRGMHRSHDHLSVAPLAVEPTTGETHLRHHVSPNGYYRGRKVIKTKND) form a disordered region. Basic residues-rich tracts occupy residues 9–19 (SPSKRGMHRSH) and 49–59 (RGRKVIKTKND).

Belongs to the bacterial ribosomal protein bL32 family.

This chain is Large ribosomal subunit protein bL32, found in Cupriavidus metallidurans (strain ATCC 43123 / DSM 2839 / NBRC 102507 / CH34) (Ralstonia metallidurans).